Reading from the N-terminus, the 542-residue chain is Putative cysteine ligase BshC (542 aa).

The stretch at 458–487 (VAKNAAILQAQIEFLQHALERALLRKHETE) forms a coiled coil.

This sequence belongs to the BshC family.

In terms of biological role, involved in bacillithiol (BSH) biosynthesis. May catalyze the last step of the pathway, the addition of cysteine to glucosamine malate (GlcN-Mal) to generate BSH. In Geobacillus kaustophilus (strain HTA426), this protein is Putative cysteine ligase BshC.